Here is a 232-residue protein sequence, read N- to C-terminus: uncharacterized protein (232 aa).

The Autotransporter domain maps to 1-232 (MIIKKSGGRW…LYTMGVSARF (232 aa)).

This is an uncharacterized protein from Escherichia coli (strain K12).